Consider the following 288-residue polypeptide: 4-diphosphocytidyl-2-C-methyl-D-erythritol kinase (288 aa).

Lys-12 is an active-site residue. An ATP-binding site is contributed by 95–105 (PAGGGVGGGSS). Asp-137 is an active-site residue.

This sequence belongs to the GHMP kinase family. IspE subfamily.

The catalysed reaction is 4-CDP-2-C-methyl-D-erythritol + ATP = 4-CDP-2-C-methyl-D-erythritol 2-phosphate + ADP + H(+). It participates in isoprenoid biosynthesis; isopentenyl diphosphate biosynthesis via DXP pathway; isopentenyl diphosphate from 1-deoxy-D-xylulose 5-phosphate: step 3/6. Functionally, catalyzes the phosphorylation of the position 2 hydroxy group of 4-diphosphocytidyl-2C-methyl-D-erythritol. This Halorhodospira halophila (strain DSM 244 / SL1) (Ectothiorhodospira halophila (strain DSM 244 / SL1)) protein is 4-diphosphocytidyl-2-C-methyl-D-erythritol kinase.